Consider the following 796-residue polypeptide: Polyribonucleotide nucleotidyltransferase (796 aa).

D490 and D496 together coordinate Mg(2+). The region spanning P557–I616 is the KH domain. Positions G626–R693 constitute an S1 motif domain. Low complexity predominate over residues S714–S736. The interval S714–F796 is disordered. Residues H740–R755 are compositionally biased toward basic residues. Positions S771 to R784 are enriched in low complexity. A compositionally biased stretch (basic and acidic residues) spans N785–F796.

This sequence belongs to the polyribonucleotide nucleotidyltransferase family. Requires Mg(2+) as cofactor.

It is found in the cytoplasm. The enzyme catalyses RNA(n+1) + phosphate = RNA(n) + a ribonucleoside 5'-diphosphate. In terms of biological role, involved in mRNA degradation. Catalyzes the phosphorolysis of single-stranded polyribonucleotides processively in the 3'- to 5'-direction. The protein is Polyribonucleotide nucleotidyltransferase of Ehrlichia canis (strain Jake).